The primary structure comprises 84 residues: MDNQFFKNIEKKTGVKMQDVMNLAGSLQNANFKDENTVRSVINRVAQMANRRVPKELEDKIVESITSGKEKLDFGTISKMMDNK.

It localises to the cytoplasm. In terms of biological role, transcription factor involved in spore coat assembly and spore resistance. Required for gene regulation during the latter stages of sporulation. Regulates the transcription of at least cgeA, cotG and cotS. May directly or indirectly control the function of the GerE protein. The protein is Sporulation-specific transcription factor SpoVIF of Bacillus subtilis (strain 168).